Here is a 163-residue protein sequence, read N- to C-terminus: Large ribosomal subunit protein uL10 (163 aa).

Belongs to the universal ribosomal protein uL10 family. Part of the ribosomal stalk of the 50S ribosomal subunit. The N-terminus interacts with L11 and the large rRNA to form the base of the stalk. The C-terminus forms an elongated spine to which L12 dimers bind in a sequential fashion forming a multimeric L10(L12)X complex.

Functionally, forms part of the ribosomal stalk, playing a central role in the interaction of the ribosome with GTP-bound translation factors. This is Large ribosomal subunit protein uL10 from Histophilus somni (strain 2336) (Haemophilus somnus).